The sequence spans 359 residues: Holliday junction branch migration complex subunit RuvB (359 aa).

Residues 1–22 (MAIVSSNAEPSKGAPRPKPSRV) form a disordered region. The interval 13 to 204 (GAPRPKPSRV…FGLIQRLEFY (192 aa)) is large ATPase domain (RuvB-L). ATP contacts are provided by Leu43, Arg44, Gly85, Lys88, Thr89, Thr90, Arg194, Tyr204, and Arg241. Thr89 is a Mg(2+) binding site. Residues 205–276 (GQEDLQAIVM…LVDEALTLHR (72 aa)) are small ATPAse domain (RuvB-S). The interval 279–359 (GKGLDASDRR…GWPADEGDAA (81 aa)) is head domain (RuvB-H). Residues Arg334 and Arg339 each contribute to the DNA site.

This sequence belongs to the RuvB family. In terms of assembly, homohexamer. Forms an RuvA(8)-RuvB(12)-Holliday junction (HJ) complex. HJ DNA is sandwiched between 2 RuvA tetramers; dsDNA enters through RuvA and exits via RuvB. An RuvB hexamer assembles on each DNA strand where it exits the tetramer. Each RuvB hexamer is contacted by two RuvA subunits (via domain III) on 2 adjacent RuvB subunits; this complex drives branch migration. In the full resolvosome a probable DNA-RuvA(4)-RuvB(12)-RuvC(2) complex forms which resolves the HJ.

It is found in the cytoplasm. It carries out the reaction ATP + H2O = ADP + phosphate + H(+). Functionally, the RuvA-RuvB-RuvC complex processes Holliday junction (HJ) DNA during genetic recombination and DNA repair, while the RuvA-RuvB complex plays an important role in the rescue of blocked DNA replication forks via replication fork reversal (RFR). RuvA specifically binds to HJ cruciform DNA, conferring on it an open structure. The RuvB hexamer acts as an ATP-dependent pump, pulling dsDNA into and through the RuvAB complex. RuvB forms 2 homohexamers on either side of HJ DNA bound by 1 or 2 RuvA tetramers; 4 subunits per hexamer contact DNA at a time. Coordinated motions by a converter formed by DNA-disengaged RuvB subunits stimulates ATP hydrolysis and nucleotide exchange. Immobilization of the converter enables RuvB to convert the ATP-contained energy into a lever motion, pulling 2 nucleotides of DNA out of the RuvA tetramer per ATP hydrolyzed, thus driving DNA branch migration. The RuvB motors rotate together with the DNA substrate, which together with the progressing nucleotide cycle form the mechanistic basis for DNA recombination by continuous HJ branch migration. Branch migration allows RuvC to scan DNA until it finds its consensus sequence, where it cleaves and resolves cruciform DNA. This chain is Holliday junction branch migration complex subunit RuvB, found in Synechococcus sp. (strain CC9311).